Reading from the N-terminus, the 141-residue chain is Large ribosomal subunit protein uL22 (141 aa).

Residues 110–141 (EEKKTVAKKTTTTKAPAKKTTSTKKATAKKES) are disordered. The span at 117-134 (KKTTTTKAPAKKTTSTKK) shows a compositional bias: low complexity.

This sequence belongs to the universal ribosomal protein uL22 family. As to quaternary structure, part of the 50S ribosomal subunit.

Its function is as follows. This protein binds specifically to 23S rRNA; its binding is stimulated by other ribosomal proteins, e.g. L4, L17, and L20. It is important during the early stages of 50S assembly. It makes multiple contacts with different domains of the 23S rRNA in the assembled 50S subunit and ribosome. The globular domain of the protein is located near the polypeptide exit tunnel on the outside of the subunit, while an extended beta-hairpin is found that lines the wall of the exit tunnel in the center of the 70S ribosome. The protein is Large ribosomal subunit protein uL22 of Campylobacter jejuni subsp. doylei (strain ATCC BAA-1458 / RM4099 / 269.97).